A 259-amino-acid chain; its full sequence is 3-deoxy-manno-octulosonate cytidylyltransferase (259 aa).

The protein belongs to the KdsB family.

Its subcellular location is the cytoplasm. It catalyses the reaction 3-deoxy-alpha-D-manno-oct-2-ulosonate + CTP = CMP-3-deoxy-beta-D-manno-octulosonate + diphosphate. The protein operates within nucleotide-sugar biosynthesis; CMP-3-deoxy-D-manno-octulosonate biosynthesis; CMP-3-deoxy-D-manno-octulosonate from 3-deoxy-D-manno-octulosonate and CTP: step 1/1. It functions in the pathway bacterial outer membrane biogenesis; lipopolysaccharide biosynthesis. In terms of biological role, activates KDO (a required 8-carbon sugar) for incorporation into bacterial lipopolysaccharide in Gram-negative bacteria. The protein is 3-deoxy-manno-octulosonate cytidylyltransferase of Maricaulis maris (strain MCS10) (Caulobacter maris).